Here is a 185-residue protein sequence, read N- to C-terminus: Protein GrpE (185 aa).

Residues 1-12 (MADEQLNEKDLN) show a composition bias toward basic and acidic residues. Positions 1 to 22 (MADEQLNEKDLNVEETGAGNAA) are disordered.

Belongs to the GrpE family. As to quaternary structure, homodimer.

Its subcellular location is the cytoplasm. In terms of biological role, participates actively in the response to hyperosmotic and heat shock by preventing the aggregation of stress-denatured proteins, in association with DnaK and GrpE. It is the nucleotide exchange factor for DnaK and may function as a thermosensor. Unfolded proteins bind initially to DnaJ; upon interaction with the DnaJ-bound protein, DnaK hydrolyzes its bound ATP, resulting in the formation of a stable complex. GrpE releases ADP from DnaK; ATP binding to DnaK triggers the release of the substrate protein, thus completing the reaction cycle. Several rounds of ATP-dependent interactions between DnaJ, DnaK and GrpE are required for fully efficient folding. In Pseudomonas putida (strain ATCC 700007 / DSM 6899 / JCM 31910 / BCRC 17059 / LMG 24140 / F1), this protein is Protein GrpE.